We begin with the raw amino-acid sequence, 147 residues long: Hemoglobin subunit beta (147 aa).

Position 2 is an N-acetylvaline (Val2). Positions 3–147 (NLSGDEKNAV…VANALAHRYH (145 aa)) constitute a Globin domain. Ser45 bears the Phosphoserine mark. Lys60 bears the N6-acetyllysine mark. His64 is a binding site for heme b. Lys83 bears the N6-acetyllysine mark. His93 is a binding site for heme b. Cys94 carries the post-translational modification S-nitrosocysteine.

Belongs to the globin family. Heterotetramer of two alpha chains and two beta chains. In terms of tissue distribution, red blood cells.

Involved in oxygen transport from the lung to the various peripheral tissues. The sequence is that of Hemoglobin subunit beta (HBB) from Vicugna pacos (Alpaca).